Consider the following 286-residue polypeptide: NAD kinase (286 aa).

The Proton acceptor role is filled by D66. NAD(+) contacts are provided by residues 66-67, 137-138, R148, R165, D167, and 178-183; these read DG, ND, and TAYSMS.

The protein belongs to the NAD kinase family. The cofactor is a divalent metal cation.

The protein localises to the cytoplasm. The catalysed reaction is NAD(+) + ATP = ADP + NADP(+) + H(+). In terms of biological role, involved in the regulation of the intracellular balance of NAD and NADP, and is a key enzyme in the biosynthesis of NADP. Catalyzes specifically the phosphorylation on 2'-hydroxyl of the adenosine moiety of NAD to yield NADP. In Chlorobium chlorochromatii (strain CaD3), this protein is NAD kinase.